Here is a 382-residue protein sequence, read N- to C-terminus: DNA double-strand break repair protein Mre11 (382 aa).

Mn(2+) contacts are provided by aspartate 8, histidine 10, aspartate 49, and aspartate 84. Histidine 85 functions as the Proton donor in the catalytic mechanism. The Mn(2+) site is built by histidine 156, histidine 187, and histidine 189.

Belongs to the MRE11/RAD32 family. In terms of assembly, homodimer. Forms a heterotetramer composed of two Mre11 subunits and two Rad50 subunits. Interacts with Rad50 and HerA. Mn(2+) is required as a cofactor.

With respect to regulation, nuclease activity is regulated by Rad50. Part of the Rad50/Mre11 complex, which is involved in the early steps of DNA double-strand break (DSB) repair. The complex may facilitate opening of the processed DNA ends to aid in the recruitment of HerA and NurA. Mre11 binds to DSB ends and has both double-stranded 3'-5' exonuclease activity and single-stranded endonuclease activity. Recruited immediately to chromosomal DNA after gamma irradiation, and remains DNA bound in the course of DNA repair. In Sulfolobus acidocaldarius (strain ATCC 33909 / DSM 639 / JCM 8929 / NBRC 15157 / NCIMB 11770), this protein is DNA double-strand break repair protein Mre11.